A 191-amino-acid chain; its full sequence is Cell division protein SepF (191 aa).

The disordered stretch occupies residues 21 to 96 (EVEEPAVASV…NQQPAQEKTT (76 aa)). Residues 25–56 (PAVASVKRQQDAAQPASQQQKAQSHQYHQSAS) are compositionally biased toward low complexity. 2 stretches are compositionally biased toward polar residues: residues 57-69 (RPSQ…GQNR) and 86-95 (HNQQPAQEKT).

Belongs to the SepF family. As to quaternary structure, homodimer. Interacts with FtsZ.

It is found in the cytoplasm. Cell division protein that is part of the divisome complex and is recruited early to the Z-ring. Probably stimulates Z-ring formation, perhaps through the cross-linking of FtsZ protofilaments. Its function overlaps with FtsA. The chain is Cell division protein SepF from Streptococcus mutans serotype c (strain ATCC 700610 / UA159).